The sequence spans 430 residues: Multisubstrate adapter protein soc-1 (430 aa).

A PH domain is found at 7–133 (NIILEGSLKR…WVNEICKLCK (127 aa)). Positions 192–222 (SHNSLPSNPNYNNLPDPLESSRSETSSMYSS) are enriched in low complexity. 3 disordered regions span residues 192-246 (SHNS…TRHT), 275-303 (EDAE…SEGF), and 315-377 (RRAP…RNLD). Positions 341–369 (RNLSRNGVNENGNYSATFSSRTSNYQQSE) are enriched in polar residues.

Interacts (via C-terminus) with sem-5 (probably via SH3 domain 2). Interacts with nicotinic acetylcholine receptor. Post-translationally, may be phosphorylated.

In terms of biological role, adapter protein which modulates signaling mediated by several receptor tyrosine kinases. Plays a role in fluid homeostasis, probably downstream of receptor egl-15 and upstream of let-60/Ras. Involved in nicotinic acetylcholine receptor (nAChR)-mediated sensitivity to nicotine and levamisole and gamma-aminobutyric acid (GABA)receptor-mediated sensitivity to muscimol. Regulates synaptic levels of nAchR receptor subunit lev-1 and unc-38, and GABA receptor subunit unc-49 in the nerve cord, probably downstream of egl-15. Regulates motility. During the formation of neuromuscular junctions at the larval stage, down-regulates membrane protrusion from body wall muscles, probably downstream of egl-15. Promotes vulva induction and down-regulates fertility, probably downstream of receptor let-23. Down-regulates daf-2-mediated repression of dauer formation and positively regulates daf-2-mediated aging. May be involved in the recruitment of phosphatase ptp-2 to egl-15. The chain is Multisubstrate adapter protein soc-1 from Caenorhabditis elegans.